The sequence spans 861 residues: ToMV resistant protein Tm-2 netted virescent (861 aa).

Residues 63-83 (VKNLLKDIQELAGDVEDLLDD) adopt a coiled-coil conformation. The region spanning 162–388 (DDFNMLQAKL…LESMGHKVQD (227 aa)) is the NB-ARC domain. Residue 185–192 (GMPGLGKT) participates in ATP binding. LRR repeat units follow at residues 225–248 (LDIA…NLRS), 305–327 (LHAL…IFNF), 388–411 (DGCA…CFLY), 449–472 (LAED…TYNG), 510–536 (VARL…KLEK), 585–608 (MTCL…IVKL), 609–631 (TRLE…VWES), 652–680 (ISSF…FFEP), 689–710 (LRKL…IFSP), 712–735 (LKAL…LSSY), 736–758 (PHIA…SFPP), 784–807 (LRKL…EANG), and 810–835 (FPQL…DVSM).

This sequence belongs to the disease resistance NB-LRR family. As to quaternary structure, (Microbial infection) Interacts with tobamoviruses mouvement protein at the plasma membrane; this interaction triggers defense responses leading to programmed cell death. Binds to HSP90 proteins; this interaction seems required for defense responses toward tobamoviruses.

The protein localises to the cell membrane. Inhibitor of viral mouvements which confers resistance to some tobamoviruses including tomato mosaic virus (ToMV) (e.g. isolate L and W3) and tobacco mosaic virus (TMV), but not to resistance-breaking isolates (e.g. Ltbl) ToMV and tomato brown rugose fruit virus (ToBRFV). Elicits a hypersensitive reaction in response to avirulent (Avr) movement proteins from resistance inducing tobamoviruses (e.g. ToMV and TMV) strains, thus leading to programmed cell death. The sequence is that of ToMV resistant protein Tm-2 netted virescent from Solanum lycopersicum (Tomato).